The primary structure comprises 313 residues: Ribosomal RNA small subunit methyltransferase H (313 aa).

Residues 35-37 (GGH), aspartate 55, phenylalanine 80, aspartate 102, and glutamine 109 each bind S-adenosyl-L-methionine.

The protein belongs to the methyltransferase superfamily. RsmH family.

It localises to the cytoplasm. The enzyme catalyses cytidine(1402) in 16S rRNA + S-adenosyl-L-methionine = N(4)-methylcytidine(1402) in 16S rRNA + S-adenosyl-L-homocysteine + H(+). Functionally, specifically methylates the N4 position of cytidine in position 1402 (C1402) of 16S rRNA. The protein is Ribosomal RNA small subunit methyltransferase H of Shewanella denitrificans (strain OS217 / ATCC BAA-1090 / DSM 15013).